The sequence spans 855 residues: RE1-silencing transcription factor (855 aa).

A C2H2-type 1 zinc finger spans residues 141–163 (FFCKPCQYQGENEQEFIVHIRTH). Positions 172–199 (NGGDSDEDLSADAGPQTSVPNAESAESN) are disordered. Positions 186 to 199 (PQTSVPNAESAESN) are enriched in polar residues. 7 consecutive C2H2-type zinc fingers follow at residues 204–226 (IRCE…LKHH), 236–258 (FKCT…LRNH), 264–286 (FTCS…IRTH), 292–314 (FQCI…MRTH), 320–343 (FKCD…RQVH), 349–371 (LSCP…VELH), and 377–400 (FLCP…KSRH). The interval 458 to 811 (NAVVETEKSS…ETPTEERDAS (354 aa)) is disordered. Basic and acidic residues-rich tracts occupy residues 462–472 (ETEKSSKKNMD), 481–496 (NEKK…EKTA), and 504–535 (AVKD…EKAL). Over residues 548 to 569 (SSVQQQSDDCEQTQHTPQQNET) the composition is skewed to polar residues. The segment covering 570–580 (QENRPEKENRS) has biased composition (basic and acidic residues). Residues 594–604 (QTKKPCKKQTK) are compositionally biased toward basic residues. Positions 628 to 638 (RKAENPAEPKQ) are enriched in basic and acidic residues. The segment covering 639 to 648 (RIKRTKKKKD) has biased composition (basic residues). The span at 652-662 (PTTSEANQTNP) shows a compositional bias: polar residues. 2 stretches are compositionally biased toward basic and acidic residues: residues 711–721 (PAVEDVQRPLE) and 799–811 (KLPE…RDAS). The segment at 818-840 (HTCIFCDRSFALEMDYRKHLNRH) adopts a C2H2-type 9 zinc-finger fold.

It is found in the nucleus. It localises to the cytoplasm. Functionally, transcriptional repressor which binds neuron-restrictive silencer element (NRSE) and represses neuronal gene transcription in non-neuronal cells. The sequence is that of RE1-silencing transcription factor (rest) from Danio rerio (Zebrafish).